The sequence spans 269 residues: Energy-coupling factor transporter ATP-binding protein EcfA1 (269 aa).

In terms of domain architecture, ABC transporter spans 8–242 (IVFKNVSFQY…AEELTTIGLD (235 aa)). 42–49 (GHNGSGKS) contributes to the ATP binding site.

Belongs to the ABC transporter superfamily. Energy-coupling factor EcfA family. As to quaternary structure, forms a stable energy-coupling factor (ECF) transporter complex composed of 2 membrane-embedded substrate-binding proteins (S component), 2 ATP-binding proteins (A component) and 2 transmembrane proteins (T component).

Its subcellular location is the cell membrane. In terms of biological role, ATP-binding (A) component of a common energy-coupling factor (ECF) ABC-transporter complex. Unlike classic ABC transporters this ECF transporter provides the energy necessary to transport a number of different substrates. This Staphylococcus aureus (strain MSSA476) protein is Energy-coupling factor transporter ATP-binding protein EcfA1.